The sequence spans 475 residues: MTVKTRFAPSPTGYLHVGGARTALYSWLYAKNQGGEFVLRIEDTDLERNSQEAVDAILEGMEWLGLEWNEGPYFQTQRFDRYNEMVDKLLEEDKAYKCYASKELLDEVRAEQEANKEMPRYDANHPKIKAANEAAKDGEPCVIRFRNPKEGSVVFDDQIRGRIEISNTQMDDLIIRRTDGSPTYNFCVVVDDWDMGITHVVRGEDHINNTPRQINIYEALGAPVPTFAHCAMILGDDGAKLSKRHGAVSVMQYRDMGYLPAALNNYLVRLGWSHGDQEIFTQEEMINLFSLNAVSKSASAFNTDKLQWLNNHYIKNSDPAYVAEHLQWHLDQQKLDVTNGPAITEVIKLVGERCNTLVELAEQIGYFYEDFAEFEAGAAKKHLRGVAKEPLELALAKAEALTEWTTANIKDGVIAAVCEELEIGMGKIGMPLRVAVTGGGQSPSVDAVMELIGKERCVARIKMALEFIAEREANA.

The 'HIGH' region motif lies at 9 to 19 (PSPTGYLHVGG). A 'KMSKS' region motif is present at residues 240 to 244 (KLSKR). Lys243 is a binding site for ATP.

This sequence belongs to the class-I aminoacyl-tRNA synthetase family. Glutamate--tRNA ligase type 1 subfamily. In terms of assembly, monomer.

The protein resides in the cytoplasm. It catalyses the reaction tRNA(Glu) + L-glutamate + ATP = L-glutamyl-tRNA(Glu) + AMP + diphosphate. Its function is as follows. Catalyzes the attachment of glutamate to tRNA(Glu) in a two-step reaction: glutamate is first activated by ATP to form Glu-AMP and then transferred to the acceptor end of tRNA(Glu). The polypeptide is Glutamate--tRNA ligase (Vibrio campbellii (strain ATCC BAA-1116)).